The sequence spans 209 residues: Chaperone protein TorD (209 aa).

Belongs to the TorD/DmsD family. TorD subfamily.

It localises to the cytoplasm. In terms of biological role, involved in the biogenesis of TorA. Acts on TorA before the insertion of the molybdenum cofactor and, as a result, probably favors a conformation of the apoenzyme that is competent for acquiring the cofactor. This is Chaperone protein TorD from Shewanella massilia.